The chain runs to 420 residues: MEEVEVAEVKNARVSLTGEKTKPMKLAEVTSINVNRTKTEMEEFNRVLGGGVVPGSLVLIGGDPGIGKSTLLLQVSTQLSQVGTVLYVSGEESAQQIKLRAERLGDIDSEFYLYAETNMQSVRAEVERIQPDFLIIDSIQTIMSPEISGVQGSVSQVREVTAELMQLAKTNNIAIFIVGHVTKEGTLAGPRMLEHMVDTVLYFEGERHHTFRILRAVKNRFGSTNEIGIFEMQSGGLVEVLNPSQVFLEERLDGATGSSIVVTMEGTRPILAEVQALVTPTMFGNAKRTTTGLDFNRASLIMAVLEKRAGLLLQNQDAYLKSAGGVKLDEPAIDLAVAVAIASSYKDKPTNPQECFVGELGLTGEIRRVNRIEQRINEAAKLGFTKIYVPKNSLTGITLPKEIQVIGVTTIQEVLKKVFA.

62–69 (GDPGIGKS) provides a ligand contact to ATP. The short motif at 218-222 (KNRFG) is the RadA KNRFG motif element. Residues 317–420 (DAYLKSAGGV…IQEVLKKVFA (104 aa)) form a lon-protease-like region.

Belongs to the RecA family. RadA subfamily.

Its function is as follows. Plays a role in repairing double-strand DNA breaks, probably involving stabilizing or processing branched DNA or blocked replication forks. Required for efficient transformation with chromosomal (linear) DNA, but not for replicative plasmid DNA. Its increased sensitivity to a DNA damaging agent suggests it may be required for DNA repair. In Streptococcus pneumoniae (strain ATCC BAA-255 / R6), this protein is DNA repair protein RadA.